Consider the following 100-residue polypeptide: Small ribosomal subunit protein uS14c (100 aa).

Belongs to the universal ribosomal protein uS14 family. In terms of assembly, part of the 30S ribosomal subunit.

It is found in the plastid. Its subcellular location is the chloroplast. Binds 16S rRNA, required for the assembly of 30S particles. This chain is Small ribosomal subunit protein uS14c, found in Anthoceros angustus (Hornwort).